Consider the following 428-residue polypeptide: Putative ankyrin repeat protein FPV234 (428 aa).

ANK repeat units follow at residues 6 to 35 (KDDI…DPNV), 39 to 68 (YQYS…DPNI), 71 to 100 (FFTP…IVNL), 103 to 132 (YCLK…DINS), 137 to 169 (NGKY…DINK), 174 to 202 (TNTS…NINI), 206 to 238 (MGRN…DINA), and 242 to 271 (EGNT…YLSY).

This chain is Putative ankyrin repeat protein FPV234, found in Fowlpox virus (strain NVSL) (FPV).